Reading from the N-terminus, the 162-residue chain is CASP-like protein 1C1 (162 aa).

Topologically, residues 1–7 (MAKLHRL) are cytoplasmic. The helical transmembrane segment at 8 to 28 (ISAVLRLAAAGAAAAAAIIMV) threads the bilayer. At 29-50 (TSHETTSFFGIEMEAKYSYTPS) the chain is on the extracellular side. The chain crosses the membrane as a helical span at residues 51–71 (FVFFVVAFAVAFAYSLLALLA). The Cytoplasmic portion of the chain corresponds to 72–79 (RPGSTASR). The chain crosses the membrane as a helical span at residues 80 to 100 (LLLLSDVMVGMLLTGAVAATG). Over 101–128 (AISQVGKSGNEHAGWLPICAQVQAYCSH) the chain is Extracellular. The chain crosses the membrane as a helical span at residues 129-149 (VMGALIAGFVSLLLYFLIIMY). The Cytoplasmic segment spans residues 150-162 (SLHAVAEPLCSCH).

The protein belongs to the Casparian strip membrane proteins (CASP) family. As to quaternary structure, homodimer and heterodimers.

Its subcellular location is the cell membrane. This chain is CASP-like protein 1C1, found in Sorghum bicolor (Sorghum).